Here is a 136-residue protein sequence, read N- to C-terminus: MTERTLVLIKPDGVRRGLVGEVLNRIERKGLTLAALELKNVDDATARAHYAEHAEKPFFGSLLEFITSGPLVAAVLEGPRAIAAFRQIAGGTDPVEKAATGSIRGDFALETQENLVHGSDSPESAAREIALWFPAL.

ATP is bound by residues Lys10, Phe58, Arg86, Thr92, Arg104, and Asn114. His117 acts as the Pros-phosphohistidine intermediate in catalysis.

The protein belongs to the NDK family. As to quaternary structure, homotetramer. It depends on Mg(2+) as a cofactor.

The protein resides in the cytoplasm. The catalysed reaction is a 2'-deoxyribonucleoside 5'-diphosphate + ATP = a 2'-deoxyribonucleoside 5'-triphosphate + ADP. It carries out the reaction a ribonucleoside 5'-diphosphate + ATP = a ribonucleoside 5'-triphosphate + ADP. In terms of biological role, major role in the synthesis of nucleoside triphosphates other than ATP. The ATP gamma phosphate is transferred to the NDP beta phosphate via a ping-pong mechanism, using a phosphorylated active-site intermediate. In Mycobacteroides abscessus (strain ATCC 19977 / DSM 44196 / CCUG 20993 / CIP 104536 / JCM 13569 / NCTC 13031 / TMC 1543 / L948) (Mycobacterium abscessus), this protein is Nucleoside diphosphate kinase.